The primary structure comprises 400 residues: Enoyl-[acyl-carrier-protein] reductase [NADH] (400 aa).

NAD(+)-binding positions include 48-53 (GASTGY), 74-75 (FE), 111-112 (DA), and 139-140 (LA). Tyr-225 serves as a coordination point for substrate. Tyr-235 acts as the Proton donor in catalysis. Residues Lys-244 and 273 to 275 (VVT) contribute to the NAD(+) site.

Belongs to the TER reductase family. In terms of assembly, monomer.

It catalyses the reaction a 2,3-saturated acyl-[ACP] + NAD(+) = a (2E)-enoyl-[ACP] + NADH + H(+). It participates in lipid metabolism; fatty acid biosynthesis. Involved in the final reduction of the elongation cycle of fatty acid synthesis (FAS II). Catalyzes the reduction of a carbon-carbon double bond in an enoyl moiety that is covalently linked to an acyl carrier protein (ACP). This chain is Enoyl-[acyl-carrier-protein] reductase [NADH], found in Burkholderia lata (strain ATCC 17760 / DSM 23089 / LMG 22485 / NCIMB 9086 / R18194 / 383).